The following is a 177-amino-acid chain: ATP synthase subunit b, chloroplastic (177 aa).

Residues 22-42 (ILETNIINLAAVVGIVVFFVG) form a helical membrane-spanning segment.

It belongs to the ATPase B chain family. F-type ATPases have 2 components, F(1) - the catalytic core - and F(0) - the membrane proton channel. F(1) has five subunits: alpha(3), beta(3), gamma(1), delta(1), epsilon(1). F(0) has four main subunits: a(1), b(1), b'(1) and c(10-14). The alpha and beta chains form an alternating ring which encloses part of the gamma chain. F(1) is attached to F(0) by a central stalk formed by the gamma and epsilon chains, while a peripheral stalk is formed by the delta, b and b' chains.

The protein resides in the plastid. Its subcellular location is the chloroplast thylakoid membrane. In terms of biological role, f(1)F(0) ATP synthase produces ATP from ADP in the presence of a proton or sodium gradient. F-type ATPases consist of two structural domains, F(1) containing the extramembraneous catalytic core and F(0) containing the membrane proton channel, linked together by a central stalk and a peripheral stalk. During catalysis, ATP synthesis in the catalytic domain of F(1) is coupled via a rotary mechanism of the central stalk subunits to proton translocation. Functionally, component of the F(0) channel, it forms part of the peripheral stalk, linking F(1) to F(0). The chain is ATP synthase subunit b, chloroplastic from Oedogonium cardiacum (Filamentous green alga).